Here is a 451-residue protein sequence, read N- to C-terminus: CDP-diacylglycerol--serine O-phosphatidyltransferase PssA (451 aa).

PLD phosphodiesterase domains are found at residues 27-224 (VDFF…ELRD) and 239-451 (SVTP…SRIL). Positions 56, 57, 91, 94, 96, 97, 132, 133, 136, 138, 140, 152, 159, and 167 each coordinate a CDP-1,2-diacyl-sn-glycerol. H138 is an active-site residue. Residue D169 is part of the active site. A CDP-1,2-diacyl-sn-glycerol-binding residues include Y273, D305, F306, I316, I317, L320, L323, and Y324. H357 is an active-site residue. A CDP-1,2-diacyl-sn-glycerol-binding residues include K359, N374, and R378. E385 is an active-site residue. 4 residues coordinate a CDP-1,2-diacyl-sn-glycerol: L438, I447, I450, and L451.

It belongs to the CDP-alcohol phosphatidyltransferase class-II family. In terms of assembly, multimeric. Interacts with ACP, YbgC and PlsB, forming altogether a complex at the inner membrane. Monomeric and dimeric; existing in equilibrium, but the monomer probably exhibits preferential membrane association.

It is found in the cytoplasm. It localises to the cell inner membrane. It carries out the reaction a CDP-1,2-diacyl-sn-glycerol + L-serine = a 1,2-diacyl-sn-glycero-3-phospho-L-serine + CMP + H(+). The protein operates within phospholipid metabolism; phosphatidylethanolamine biosynthesis; phosphatidylethanolamine from CDP-diacylglycerol: step 1/2. Functionally, catalyzes the conversion of cytidine diphosphate diacylglycerol (CDP-DG) and L-serine into phosphatidylserine. Essential for biosynthesis of phosphatidylethanolamine, one of the major membrane phospholipids. Phosphatidylserine is later converted into phosphatidylethanolamine via the action of phosphatidylserine decarboxylase psd. Associates with the bacterial membrane for its role, which depends on the levels of anionic phospholipids in the membrane. The protein is CDP-diacylglycerol--serine O-phosphatidyltransferase PssA (pssA) of Escherichia coli (strain K12).